Reading from the N-terminus, the 466-residue chain is Ribulose bisphosphate carboxylase large chain (466 aa).

Lys5 carries the N6,N6,N6-trimethyllysine modification. Residues Asn114 and Thr164 each coordinate substrate. The active-site Proton acceptor is the Lys166. Lys168 is a substrate binding site. Residues Lys192, Asp194, and Glu195 each coordinate Mg(2+). The residue at position 192 (Lys192) is an N6-carboxylysine. The active-site Proton acceptor is His285. Substrate is bound by residues Arg286, His318, and Ser370.

It belongs to the RuBisCO large chain family. Type I subfamily. Heterohexadecamer of 8 large chains and 8 small chains; disulfide-linked. The disulfide link is formed within the large subunit homodimers. Mg(2+) is required as a cofactor. The disulfide bond which can form in the large chain dimeric partners within the hexadecamer appears to be associated with oxidative stress and protein turnover.

It localises to the plastid. Its subcellular location is the chloroplast. The enzyme catalyses 2 (2R)-3-phosphoglycerate + 2 H(+) = D-ribulose 1,5-bisphosphate + CO2 + H2O. The catalysed reaction is D-ribulose 1,5-bisphosphate + O2 = 2-phosphoglycolate + (2R)-3-phosphoglycerate + 2 H(+). Functionally, ruBisCO catalyzes two reactions: the carboxylation of D-ribulose 1,5-bisphosphate, the primary event in carbon dioxide fixation, as well as the oxidative fragmentation of the pentose substrate in the photorespiration process. Both reactions occur simultaneously and in competition at the same active site. The protein is Ribulose bisphosphate carboxylase large chain of Adoxa moschatellina (Moschatel).